A 150-amino-acid polypeptide reads, in one-letter code: Glycophorin-A (150 aa).

Positions 1–19 are cleaved as a signal peptide; it reads MYGKIIFVLLLSEIVSISA. Topologically, residues 20–91 are extracellular; the sequence is LSTTEVAMHT…QLAHHFSEPE (72 aa). Serine 21 carries an O-linked (GalNAc...) serine glycan. Residues threonine 22, threonine 23, and threonine 29 are each glycosylated (O-linked (GalNAc...) threonine). Residue serine 30 is glycosylated (O-linked (GalNAc...) serine). The O-linked (GalNAc...) threonine glycan is linked to threonine 31. The O-linked (GalNAc...) serine glycan is linked to serine 32. A glycan (O-linked (GalNAc...) threonine) is linked at threonine 36. Residues serine 38 and serine 41 are each glycosylated (O-linked (GalNAc...) serine). O-linked (GalNAc...) threonine glycosylation is present at threonine 44. Asparagine 45 carries N-linked (GlcNAc...) asparagine glycosylation. Threonine 52 and threonine 56 each carry an O-linked (GalNAc...) threonine glycan. 2 O-linked (GalNAc...) serine glycosylation sites follow: serine 63 and serine 66. O-linked (GalNAc...) threonine glycosylation occurs at threonine 69. The chain crosses the membrane as a helical span at residues 92-114; that stretch reads ITLIIFGVMAGVIGTILLISYGI. Residues 115–150 are Cytoplasmic-facing; sequence RRLIKKSPSDVKPLPSPDTDVPLSSVEIENPETSDQ. The interval 121-150 is disordered; the sequence is SPSDVKPLPSPDTDVPLSSVEIENPETSDQ. Phosphothreonine is present on threonine 133. 2 positions are modified to phosphoserine: serine 138 and serine 148.

This sequence belongs to the glycophorin A family. Homodimer. Component of the ankyrin-1 complex in the erythrocyte, composed of ANK1, RHCE, RHAG, SLC4A1, EPB42, GYPA, GYPB and AQP1. Interacts with SLC4A1; a GYPA monomer is bound at each end of the SLC4A1 dimer forming a heterotetramer. In terms of assembly, (Microbial infection) Interacts with Streptococcus gordonii hsa protein. As to quaternary structure, (Microbial infection) Interacts (in a sialic acid-independent manner) with P.falciparum MSP1 subunit p83. In terms of processing, the major O-linked glycan are NeuAc-alpha-(2-3)-Gal-beta-(1-3)-[NeuAc-alpha-(2-6)]-GalNAcOH (about 78 %) and NeuAc-alpha-(2-3)-Gal-beta-(1-3)-GalNAcOH (17 %). Minor O-glycans (5 %) include NeuAc-alpha-(2-3)-Gal-beta-(1-3)-[NeuAc-alpha-(2-6)]-GalNAcOH NeuAc-alpha-(2-8)-NeuAc-alpha-(2-3)-Gal-beta-(1-3)-GalNAcOH. About 1% of all O-linked glycans carry blood group A, B and H determinants. They derive from a type-2 precursor core structure, Gal-beta-(1,3)-GlcNAc-beta-1-R, and the antigens are synthesized by addition of fucose (H antigen-specific) and then N-acetylgalactosamine (A antigen-specific) or galactose (B antigen-specific). Specifically O-linked-glycans are NeuAc-alpha-(2-3)-Gal-beta-(1-3)-GalNAcOH-(6-1)-GlcNAc-beta-(4-1)-[Fuc-alpha-(1-2)]-Gal-beta-(3-1)-GalNAc-alpha (about 1%, B antigen-specific) and NeuAc-alpha-(2-3)-Gal-beta-(1-3)-GalNAcOH-(6-1)-GlcNAc-beta-(4-1)-[Fuc-alpha-(1-2)]-Gal-beta (1 %, O antigen-, A antigen- and B antigen-specific).

The protein localises to the cell membrane. Its function is as follows. Component of the ankyrin-1 complex, a multiprotein complex involved in the stability and shape of the erythrocyte membrane. Glycophorin A is the major intrinsic membrane protein of the erythrocyte. The N-terminal glycosylated segment, which lies outside the erythrocyte membrane, has MN blood group receptors. Appears to be important for the function of SLC4A1 and is required for high activity of SLC4A1. May be involved in translocation of SLC4A1 to the plasma membrane. (Microbial infection) Appears to be a receptor for Hepatitis A virus (HAV). In terms of biological role, (Microbial infection) Receptor for P.falciparum erythrocyte-binding antigen 175 (EBA-175); binding of EBA-175 is dependent on sialic acid residues of the O-linked glycans. This Homo sapiens (Human) protein is Glycophorin-A.